Reading from the N-terminus, the 372-residue chain is Carbamoyl phosphate synthase small chain (372 aa).

The segment at Met-1–Asn-182 is CPSase. L-glutamine-binding residues include Ser-53, Gly-234, and Gly-236. Residues Thr-186–Ala-372 enclose the Glutamine amidotransferase type-1 domain. The active-site Nucleophile is the Cys-262. Leu-263, Gln-266, Asn-304, Gly-306, and Tyr-307 together coordinate L-glutamine. Active-site residues include His-347 and Glu-349.

The protein belongs to the CarA family. In terms of assembly, composed of two chains; the small (or glutamine) chain promotes the hydrolysis of glutamine to ammonia, which is used by the large (or ammonia) chain to synthesize carbamoyl phosphate. Tetramer of heterodimers (alpha,beta)4.

The enzyme catalyses hydrogencarbonate + L-glutamine + 2 ATP + H2O = carbamoyl phosphate + L-glutamate + 2 ADP + phosphate + 2 H(+). The catalysed reaction is L-glutamine + H2O = L-glutamate + NH4(+). Its pathway is amino-acid biosynthesis; L-arginine biosynthesis; carbamoyl phosphate from bicarbonate: step 1/1. The protein operates within pyrimidine metabolism; UMP biosynthesis via de novo pathway; (S)-dihydroorotate from bicarbonate: step 1/3. Small subunit of the glutamine-dependent carbamoyl phosphate synthetase (CPSase). CPSase catalyzes the formation of carbamoyl phosphate from the ammonia moiety of glutamine, carbonate, and phosphate donated by ATP, constituting the first step of 2 biosynthetic pathways, one leading to arginine and/or urea and the other to pyrimidine nucleotides. The small subunit (glutamine amidotransferase) binds and cleaves glutamine to supply the large subunit with the substrate ammonia. The protein is Carbamoyl phosphate synthase small chain of Sulfurisphaera tokodaii (strain DSM 16993 / JCM 10545 / NBRC 100140 / 7) (Sulfolobus tokodaii).